Consider the following 128-residue polypeptide: Small ribosomal subunit protein uS12 (128 aa).

Asp89 carries the post-translational modification 3-methylthioaspartic acid.

It belongs to the universal ribosomal protein uS12 family. In terms of assembly, part of the 30S ribosomal subunit. Contacts proteins S8 and S17. May interact with IF1 in the 30S initiation complex.

In terms of biological role, with S4 and S5 plays an important role in translational accuracy. Functionally, interacts with and stabilizes bases of the 16S rRNA that are involved in tRNA selection in the A site and with the mRNA backbone. Located at the interface of the 30S and 50S subunits, it traverses the body of the 30S subunit contacting proteins on the other side and probably holding the rRNA structure together. The combined cluster of proteins S8, S12 and S17 appears to hold together the shoulder and platform of the 30S subunit. This Campylobacter jejuni subsp. jejuni serotype O:6 (strain 81116 / NCTC 11828) protein is Small ribosomal subunit protein uS12.